The primary structure comprises 142 residues: Peptide methionine sulfoxide reductase MsrB (142 aa).

Positions 10–132 (EEEWKKVLTP…NSVSLNFKTE (123 aa)) constitute a MsrB domain. Zn(2+)-binding residues include C49, C52, C98, and C101. The active-site Nucleophile is the C121.

Belongs to the MsrB Met sulfoxide reductase family. Requires Zn(2+) as cofactor.

The catalysed reaction is L-methionyl-[protein] + [thioredoxin]-disulfide + H2O = L-methionyl-(R)-S-oxide-[protein] + [thioredoxin]-dithiol. The polypeptide is Peptide methionine sulfoxide reductase MsrB (Methanosarcina barkeri (strain Fusaro / DSM 804)).